We begin with the raw amino-acid sequence, 155 residues long: Ribosomal RNA large subunit methyltransferase H (155 aa).

S-adenosyl-L-methionine is bound by residues Leu-72, Gly-103, and 122 to 127 (LSPLTL).

This sequence belongs to the RNA methyltransferase RlmH family. Homodimer.

The protein localises to the cytoplasm. The enzyme catalyses pseudouridine(1915) in 23S rRNA + S-adenosyl-L-methionine = N(3)-methylpseudouridine(1915) in 23S rRNA + S-adenosyl-L-homocysteine + H(+). Its function is as follows. Specifically methylates the pseudouridine at position 1915 (m3Psi1915) in 23S rRNA. The chain is Ribosomal RNA large subunit methyltransferase H from Aeromonas salmonicida (strain A449).